The sequence spans 426 residues: MSKSENLYAQAQQLIPGGVNSPVRAFNGVGGVPLFIERANGAYLYDADGKAYIDYVGSWGPMVLGHNHPAIRNAVIDAAERGLSFGAPTEMEVKMAALVTELVPTMDMVRMVNSGTEATMSAIRLARGFTHRDKIIKFEGCYHGHADCLLVKAGSGALTLGQPNSPGVPADFAKHTLTCTYNDLASVRAAFEQYPQEIACIIVEPVAGNMNCVPPLPDFLPGLRALCDEFDALLIIDEVMTGFRVALAGAQAHYGVEPDLTCLGKIIGGGMPVGAFGGRREVMEALAPGGPVYQAGTLSGNPIAMAAGFACLTEVAQPGTHATLTELTNQLADGLLAAAKAENIPLVVNHVGGMFGLFFTDAASVTRYADVIRCDVERFKRFFHLMLAEGVYLAPSAFEAGFMSLAHGQAEIQHTIDAARRSFAKL.

Lys265 carries the N6-(pyridoxal phosphate)lysine modification.

It belongs to the class-III pyridoxal-phosphate-dependent aminotransferase family. HemL subfamily. Homodimer. It depends on pyridoxal 5'-phosphate as a cofactor.

Its subcellular location is the cytoplasm. It carries out the reaction (S)-4-amino-5-oxopentanoate = 5-aminolevulinate. It participates in porphyrin-containing compound metabolism; protoporphyrin-IX biosynthesis; 5-aminolevulinate from L-glutamyl-tRNA(Glu): step 2/2. In Erwinia tasmaniensis (strain DSM 17950 / CFBP 7177 / CIP 109463 / NCPPB 4357 / Et1/99), this protein is Glutamate-1-semialdehyde 2,1-aminomutase.